A 70-amino-acid polypeptide reads, in one-letter code: DNA-directed RNA polymerase subunit omega (70 aa).

The protein belongs to the RNA polymerase subunit omega family. In terms of assembly, the RNAP catalytic core consists of 2 alpha, 1 beta, 1 beta' and 1 omega subunit. When a sigma factor is associated with the core the holoenzyme is formed, which can initiate transcription.

It catalyses the reaction RNA(n) + a ribonucleoside 5'-triphosphate = RNA(n+1) + diphosphate. In terms of biological role, promotes RNA polymerase assembly. Latches the N- and C-terminal regions of the beta' subunit thereby facilitating its interaction with the beta and alpha subunits. The polypeptide is DNA-directed RNA polymerase subunit omega (Caldanaerobacter subterraneus subsp. tengcongensis (strain DSM 15242 / JCM 11007 / NBRC 100824 / MB4) (Thermoanaerobacter tengcongensis)).